Here is a 379-residue protein sequence, read N- to C-terminus: Cytochrome b (379 aa).

The next 4 membrane-spanning stretches (helical) occupy residues 33 to 53 (FGSLLGACLIIQVITGLFLAM), 77 to 98 (WMIRYLHANGASMFFLCLFIHV), 113 to 133 (WNVGIILLFSVMATAFMGYVL), and 178 to 198 (FFALHFILPFIISAWVMIHLL). The heme b site is built by His-83 and His-97. Heme b is bound by residues His-182 and His-196. Residue His-201 participates in a ubiquinone binding. 4 helical membrane passes run 226 to 246 (TKDFLGLLLLILLLMTLALFY), 288 to 308 (LGGVVALILSILILMIIPFLQ), 320 to 340 (LSQFLFWILVADLLTLTWIGG), and 347 to 367 (FISIGQTASMLYFSLMIFIMP).

Belongs to the cytochrome b family. The cytochrome bc1 complex contains 11 subunits: 3 respiratory subunits (MT-CYB, CYC1 and UQCRFS1), 2 core proteins (UQCRC1 and UQCRC2) and 6 low-molecular weight proteins (UQCRH/QCR6, UQCRB/QCR7, UQCRQ/QCR8, UQCR10/QCR9, UQCR11/QCR10 and a cleavage product of UQCRFS1). This cytochrome bc1 complex then forms a dimer. It depends on heme b as a cofactor.

The protein resides in the mitochondrion inner membrane. Its function is as follows. Component of the ubiquinol-cytochrome c reductase complex (complex III or cytochrome b-c1 complex) that is part of the mitochondrial respiratory chain. The b-c1 complex mediates electron transfer from ubiquinol to cytochrome c. Contributes to the generation of a proton gradient across the mitochondrial membrane that is then used for ATP synthesis. This Lepilemur septentrionalis (Northern sportive lemur) protein is Cytochrome b (MT-CYB).